A 507-amino-acid chain; its full sequence is RNA-binding protein Nova-1 (507 aa).

The segment at 1-44 (MMAAAPIQQNGTHTGVPIDLDPPDSRKRPLEAPPEAGSTKRTNT) is disordered. Positions 27–43 (KRPLEAPPEAGSTKRTN) match the Bipartite nuclear localization signal motif. The 68-residue stretch at 49–116 (QYFLKVLIPS…EALNAVHGFI (68 aa)) folds into the KH 1 domain. The segment at 139-171 (QTTVNPDRIKQTLPSSPTTTKSSPSDPMTTSRA) is disordered. The segment covering 150–169 (TLPSSPTTTKSSPSDPMTTS) has biased composition (low complexity). Ser-154 is modified (phosphoserine). 2 consecutive KH domains span residues 171–237 (ANQV…VELI) and 421–488 (KDVV…QYLI). Positions 419–503 (GSKDVVEIAV…YEQGVRAANP (85 aa)) are required for RNA binding.

Interacts with PTBP2; the interaction is direct. In terms of tissue distribution, expressed in neurons of the cortex, sub-cortex, cerebellum and brainstem (at protein level). Expressed in motor neurons, but not in glia.

Its subcellular location is the nucleus. Its function is as follows. Functions to regulate alternative splicing in neurons by binding pre-mRNA in a sequence-specific manner to activate exon inclusion or exclusion. It binds specifically to the sequences 5'-YCAY-3' and regulates splicing in only a subset of regulated exons. Binding to an exonic 5'-YCAY-3' cluster changes the protein complexes assembled on pre-mRNA, blocking U1 snRNP binding and exon inclusion, whereas binding to an intronic 5'-YCAY-3' cluster enhances spliceosome assembly and exon inclusion. Binding to 5'-YCAY-3' clusters results in a local and asymmetric action to regulate spliceosome assembly and alternative splicing in neurons. Binding to an exonic 5'-YCAY-3' cluster changed the protein complexes assembled on pre-mRNA, blocking U1 snRNP (small nuclear ribonucleoprotein) binding and exon inclusion, whereas binding to an intronic 5'-YCAY-3' cluster enhanced spliceosome assembly and exon inclusion. With NOVA1, they perform unique biological functions in different brain areas and cell types. Autoregulates its own expression by acting as a splicing repressor. Acts to activate the inclusion of exon E3A in the glycine receptor alpha-2 chain and of exon E9 in gamma-aminobutyric-acid receptor gamma-2 subunit via a distal downstream UCAU-rich intronic splicing enhancer. Acts to regulate a novel glycine receptor alpha-2 chain splice variant (alpha-2N) in developing spinal cord. This chain is RNA-binding protein Nova-1, found in Mus musculus (Mouse).